The following is a 376-amino-acid chain: Chaperone protein DnaJ (376 aa).

Positions Asp5–Gly70 constitute a J domain. The CR-type zinc finger occupies Gly132 to Ser210. 8 residues coordinate Zn(2+): Cys145, Cys148, Cys162, Cys165, Cys184, Cys187, Cys198, and Cys201. CXXCXGXG motif repeat units follow at residues Cys145–Gly152, Cys162–Gly169, Cys184–Gly191, and Cys198–Gly205.

The protein belongs to the DnaJ family. As to quaternary structure, homodimer. Requires Zn(2+) as cofactor.

The protein resides in the cytoplasm. Participates actively in the response to hyperosmotic and heat shock by preventing the aggregation of stress-denatured proteins and by disaggregating proteins, also in an autonomous, DnaK-independent fashion. Unfolded proteins bind initially to DnaJ; upon interaction with the DnaJ-bound protein, DnaK hydrolyzes its bound ATP, resulting in the formation of a stable complex. GrpE releases ADP from DnaK; ATP binding to DnaK triggers the release of the substrate protein, thus completing the reaction cycle. Several rounds of ATP-dependent interactions between DnaJ, DnaK and GrpE are required for fully efficient folding. Also involved, together with DnaK and GrpE, in the DNA replication of plasmids through activation of initiation proteins. In Shewanella loihica (strain ATCC BAA-1088 / PV-4), this protein is Chaperone protein DnaJ.